Here is a 174-residue protein sequence, read N- to C-terminus: B3 domain-containing protein At3g06220 (174 aa).

A DNA-binding region (TF-B3) is located at residues Pro8–Gly101. Residues Glu114–Tyr174 form a disordered region. 2 stretches are compositionally biased toward acidic residues: residues Glu139 to Ser150 and Glu164 to Tyr174.

It is found in the nucleus. This is B3 domain-containing protein At3g06220 from Arabidopsis thaliana (Mouse-ear cress).